The chain runs to 172 residues: ATP synthase subunit b (172 aa).

The chain crosses the membrane as a helical span at residues 5-24 (LLMLLLLGSVSLFANEAAAS).

The protein belongs to the ATPase B chain family. As to quaternary structure, F-type ATPases have 2 components, F(1) - the catalytic core - and F(0) - the membrane proton channel. F(1) has five subunits: alpha(3), beta(3), gamma(1), delta(1), epsilon(1). F(0) has three main subunits: a(1), b(2) and c(10-14). The alpha and beta chains form an alternating ring which encloses part of the gamma chain. F(1) is attached to F(0) by a central stalk formed by the gamma and epsilon chains, while a peripheral stalk is formed by the delta and b chains.

Its subcellular location is the cell inner membrane. F(1)F(0) ATP synthase produces ATP from ADP in the presence of a proton or sodium gradient. F-type ATPases consist of two structural domains, F(1) containing the extramembraneous catalytic core and F(0) containing the membrane proton channel, linked together by a central stalk and a peripheral stalk. During catalysis, ATP synthesis in the catalytic domain of F(1) is coupled via a rotary mechanism of the central stalk subunits to proton translocation. Functionally, component of the F(0) channel, it forms part of the peripheral stalk, linking F(1) to F(0). The polypeptide is ATP synthase subunit b (Nitratiruptor sp. (strain SB155-2)).